We begin with the raw amino-acid sequence, 450 residues long: Beta-glucosidase (450 aa).

The active-site Proton donor is the Glu-166. Glu-355 acts as the Nucleophile in catalysis.

The protein belongs to the glycosyl hydrolase 1 family.

It catalyses the reaction Hydrolysis of terminal, non-reducing beta-D-glucosyl residues with release of beta-D-glucose.. The chain is Beta-glucosidase (bglA) from Niallia circulans (Bacillus circulans).